Reading from the N-terminus, the 111-residue chain is Nucleoid-associated protein CYA_1369 (111 aa).

The protein belongs to the YbaB/EbfC family. As to quaternary structure, homodimer.

The protein localises to the cytoplasm. It is found in the nucleoid. Its function is as follows. Binds to DNA and alters its conformation. May be involved in regulation of gene expression, nucleoid organization and DNA protection. The chain is Nucleoid-associated protein CYA_1369 from Synechococcus sp. (strain JA-3-3Ab) (Cyanobacteria bacterium Yellowstone A-Prime).